Consider the following 426-residue polypeptide: Serine--tRNA ligase (426 aa).

231 to 233 (TAE) provides a ligand contact to L-serine. ATP is bound at residue 262-264 (RSE). Glu-285 is a binding site for L-serine. 349–352 (EISS) lines the ATP pocket. Ser-385 is an L-serine binding site.

The protein belongs to the class-II aminoacyl-tRNA synthetase family. Type-1 seryl-tRNA synthetase subfamily. As to quaternary structure, homodimer. The tRNA molecule binds across the dimer.

It localises to the cytoplasm. The catalysed reaction is tRNA(Ser) + L-serine + ATP = L-seryl-tRNA(Ser) + AMP + diphosphate + H(+). It carries out the reaction tRNA(Sec) + L-serine + ATP = L-seryl-tRNA(Sec) + AMP + diphosphate + H(+). The protein operates within aminoacyl-tRNA biosynthesis; selenocysteinyl-tRNA(Sec) biosynthesis; L-seryl-tRNA(Sec) from L-serine and tRNA(Sec): step 1/1. Its function is as follows. Catalyzes the attachment of serine to tRNA(Ser). Is also able to aminoacylate tRNA(Sec) with serine, to form the misacylated tRNA L-seryl-tRNA(Sec), which will be further converted into selenocysteinyl-tRNA(Sec). The sequence is that of Serine--tRNA ligase from Teredinibacter turnerae (strain ATCC 39867 / T7901).